Here is a 197-residue protein sequence, read N- to C-terminus: ATP-dependent Clp protease proteolytic subunit (197 aa).

The Nucleophile role is filled by Ser-98. His-123 is a catalytic residue.

This sequence belongs to the peptidase S14 family. As to quaternary structure, fourteen ClpP subunits assemble into 2 heptameric rings which stack back to back to give a disk-like structure with a central cavity, resembling the structure of eukaryotic proteasomes.

It is found in the cytoplasm. The catalysed reaction is Hydrolysis of proteins to small peptides in the presence of ATP and magnesium. alpha-casein is the usual test substrate. In the absence of ATP, only oligopeptides shorter than five residues are hydrolyzed (such as succinyl-Leu-Tyr-|-NHMec, and Leu-Tyr-Leu-|-Tyr-Trp, in which cleavage of the -Tyr-|-Leu- and -Tyr-|-Trp bonds also occurs).. Cleaves peptides in various proteins in a process that requires ATP hydrolysis. Has a chymotrypsin-like activity. Plays a major role in the degradation of misfolded proteins. The protein is ATP-dependent Clp protease proteolytic subunit of Ligilactobacillus salivarius (strain UCC118) (Lactobacillus salivarius).